The chain runs to 685 residues: Putative lipase ROG1 (685 aa).

The Charge relay system role is filled by S269.

This sequence belongs to the putative lipase ROG1 family.

The polypeptide is Putative lipase ROG1 (ROG1) (Saccharomyces cerevisiae (strain ATCC 204508 / S288c) (Baker's yeast)).